Reading from the N-terminus, the 404-residue chain is Probable tRNA sulfurtransferase (404 aa).

Positions 60 to 165 (QPIVEALKLV…DEAAYISYEE (106 aa)) constitute a THUMP domain. ATP contacts are provided by residues 183 to 184 (ML), 208 to 209 (HF), Arg265, Gly287, and Gln296.

It belongs to the ThiI family.

It is found in the cytoplasm. It carries out the reaction [ThiI sulfur-carrier protein]-S-sulfanyl-L-cysteine + a uridine in tRNA + 2 reduced [2Fe-2S]-[ferredoxin] + ATP + H(+) = [ThiI sulfur-carrier protein]-L-cysteine + a 4-thiouridine in tRNA + 2 oxidized [2Fe-2S]-[ferredoxin] + AMP + diphosphate. The catalysed reaction is [ThiS sulfur-carrier protein]-C-terminal Gly-Gly-AMP + S-sulfanyl-L-cysteinyl-[cysteine desulfurase] + AH2 = [ThiS sulfur-carrier protein]-C-terminal-Gly-aminoethanethioate + L-cysteinyl-[cysteine desulfurase] + A + AMP + 2 H(+). It functions in the pathway cofactor biosynthesis; thiamine diphosphate biosynthesis. In terms of biological role, catalyzes the ATP-dependent transfer of a sulfur to tRNA to produce 4-thiouridine in position 8 of tRNAs, which functions as a near-UV photosensor. Also catalyzes the transfer of sulfur to the sulfur carrier protein ThiS, forming ThiS-thiocarboxylate. This is a step in the synthesis of thiazole, in the thiamine biosynthesis pathway. The sulfur is donated as persulfide by IscS. In Streptococcus pyogenes serotype M49 (strain NZ131), this protein is Probable tRNA sulfurtransferase.